The primary structure comprises 499 residues: Glutelin type-A 1 (499 aa).

A signal peptide spans 1–24 (MASINRPIVFFTVCLFLLCNGSLA). 2 disulfide bridges follow: Cys-46/Cys-79 and Cys-122/Cys-313. Cupin type-1 domains lie at 51-248 (LQAF…QVAR) and 319-468 (QNID…EEAQ).

Belongs to the 11S seed storage protein (globulins) family. In terms of assembly, hexamer; each subunit is composed of an acidic and a basic chain derived from a single precursor and linked by a disulfide bond.

Seed storage protein. This chain is Glutelin type-A 1 (GLUA1), found in Oryza sativa subsp. japonica (Rice).